The chain runs to 50 residues: Photosystem II reaction center protein M (50 aa).

The chain crosses the membrane as a helical span at residues 7-27 (GFIISLLFVGIPTIFLVGLYI). The interval 31-50 (DGEKSSFFSDSSKGKLGPKS) is disordered.

It belongs to the PsbM family. PSII is composed of 1 copy each of membrane proteins PsbA, PsbB, PsbC, PsbD, PsbE, PsbF, PsbH, PsbI, PsbJ, PsbK, PsbL, PsbM, PsbT, PsbX, PsbY, Psb30/Ycf12, peripheral proteins PsbO, CyanoQ (PsbQ), PsbU, PsbV and a large number of cofactors. It forms dimeric complexes.

Its subcellular location is the cellular thylakoid membrane. Its function is as follows. One of the components of the core complex of photosystem II (PSII). PSII is a light-driven water:plastoquinone oxidoreductase that uses light energy to abstract electrons from H(2)O, generating O(2) and a proton gradient subsequently used for ATP formation. It consists of a core antenna complex that captures photons, and an electron transfer chain that converts photonic excitation into a charge separation. This subunit is found at the monomer-monomer interface. The sequence is that of Photosystem II reaction center protein M from Prochlorococcus marinus (strain SARG / CCMP1375 / SS120).